We begin with the raw amino-acid sequence, 213 residues long: Cytochrome b6 (213 aa).

The helical transmembrane segment at 30-50 (IFYCLGGLTLLCFIIQCLTGV) threads the bilayer. Cys33 provides a ligand contact to heme c. Residues His84 and His98 each contribute to the heme b site. 3 helical membrane-spanning segments follow: residues 88–108 (CQLMILLVFLHMLRVYYTGAF), 114–134 (LNWVAGCFLLVLSLGLAFTGY), and 184–204 (LHVMILPAITIGFLVAHFIMI). 2 residues coordinate heme b: His185 and His200.

The protein belongs to the cytochrome b family. PetB subfamily. The subunits of the cytochrome bc complex are a Rieske Fe-S protein (PetC), cytochrome b6 (PetB), subunit IV (PetD), and a diheme cytochrome c (PetX). It depends on heme b as a cofactor. The cofactor is heme c.

The protein resides in the cell membrane. Its function is as follows. Component of the cytochrome bc complex which donates electrons to the photosynthetic reaction center. In Heliobacterium modesticaldum (strain ATCC 51547 / Ice1), this protein is Cytochrome b6.